The primary structure comprises 250 residues: 2,3-bisphosphoglycerate-dependent phosphoglycerate mutase (250 aa).

Residues 8–15 (RHGESKWN), 21–22 (TG), Arg-60, 87–90 (ERHY), Lys-98, 114–115 (RR), and 183–184 (GN) contribute to the substrate site. The active-site Tele-phosphohistidine intermediate is His-9. Glu-87 acts as the Proton donor/acceptor in catalysis.

It belongs to the phosphoglycerate mutase family. BPG-dependent PGAM subfamily.

The enzyme catalyses (2R)-2-phosphoglycerate = (2R)-3-phosphoglycerate. The protein operates within carbohydrate degradation; glycolysis; pyruvate from D-glyceraldehyde 3-phosphate: step 3/5. Functionally, catalyzes the interconversion of 2-phosphoglycerate and 3-phosphoglycerate. In Borrelia recurrentis (strain A1), this protein is 2,3-bisphosphoglycerate-dependent phosphoglycerate mutase.